Consider the following 74-residue polypeptide: Putative defensin-like protein 27 (74 aa).

The N-terminal stretch at 1 to 19 (MVHPRFVFFAFLALSVLLA) is a signal peptide. Intrachain disulfides connect Cys36–Cys74, Cys46–Cys65, Cys51–Cys70, and Cys55–Cys72.

It belongs to the DEFL family.

The protein localises to the secreted. The chain is Putative defensin-like protein 27 from Arabidopsis thaliana (Mouse-ear cress).